The primary structure comprises 254 residues: Adenosylcobinamide-GDP ribazoletransferase (254 aa).

Transmembrane regions (helical) follow at residues 36–56 (YYPL…TLLL), 61–81 (PLVT…GIHL), 114–134 (ALSA…LLAL), 138–158 (LVPY…LIGV), 197–217 (WVLQ…ILLF), and 232–252 (LYGA…FPLL).

It belongs to the CobS family. The cofactor is Mg(2+).

The protein localises to the cell membrane. The enzyme catalyses alpha-ribazole + adenosylcob(III)inamide-GDP = adenosylcob(III)alamin + GMP + H(+). It catalyses the reaction alpha-ribazole 5'-phosphate + adenosylcob(III)inamide-GDP = adenosylcob(III)alamin 5'-phosphate + GMP + H(+). It participates in cofactor biosynthesis; adenosylcobalamin biosynthesis; adenosylcobalamin from cob(II)yrinate a,c-diamide: step 7/7. Functionally, joins adenosylcobinamide-GDP and alpha-ribazole to generate adenosylcobalamin (Ado-cobalamin). Also synthesizes adenosylcobalamin 5'-phosphate from adenosylcobinamide-GDP and alpha-ribazole 5'-phosphate. This chain is Adenosylcobinamide-GDP ribazoletransferase, found in Desulfitobacterium hafniense (strain Y51).